A 28-amino-acid polypeptide reads, in one-letter code: M-poneritoxin-Dq4a (28 aa).

Alanine 28 is modified (alanine amide).

In terms of tissue distribution, expressed by the venom gland.

It localises to the secreted. Functionally, the synthetic peptide has weak antimicrobial activity against Gram-negative bacterium E.coli ATCC 10536. It does not show antimicrobial activity against the Gram-positive bacteria B.amyloliquefacies S499, L.monocytogenes 2231 and S.aureus ATCC 29213, against the Gram-negative bacteria P.putida BTP1 and P.aeruginosa PaO1, or against the fungi S.cerevisiae, R.mucilaginosa, C.cucumerinum, F.oxysporum and B.cinerea. This chain is M-poneritoxin-Dq4a, found in Dinoponera quadriceps (South American ant).